A 181-amino-acid polypeptide reads, in one-letter code: Large ribosomal subunit protein uL5c (181 aa).

It belongs to the universal ribosomal protein uL5 family. Part of the 50S ribosomal subunit; contacts the 5S rRNA.

It is found in the plastid. In terms of biological role, binds 5S rRNA, forms part of the central protuberance of the 50S subunit. The chain is Large ribosomal subunit protein uL5c (rpl5) from Helicosporidium sp. subsp. Simulium jonesii (Green alga).